Consider the following 267-residue polypeptide: Indole-3-glycerol phosphate synthase (267 aa).

It belongs to the TrpC family.

It carries out the reaction 1-(2-carboxyphenylamino)-1-deoxy-D-ribulose 5-phosphate + H(+) = (1S,2R)-1-C-(indol-3-yl)glycerol 3-phosphate + CO2 + H2O. The protein operates within amino-acid biosynthesis; L-tryptophan biosynthesis; L-tryptophan from chorismate: step 4/5. The chain is Indole-3-glycerol phosphate synthase from Polynucleobacter necessarius subsp. necessarius (strain STIR1).